We begin with the raw amino-acid sequence, 577 residues long: Arginine--tRNA ligase (577 aa).

Residues 122–132 (PNVAKEMHVGH) carry the 'HIGH' region motif.

It belongs to the class-I aminoacyl-tRNA synthetase family. Monomer.

It is found in the cytoplasm. The catalysed reaction is tRNA(Arg) + L-arginine + ATP = L-arginyl-tRNA(Arg) + AMP + diphosphate. This is Arginine--tRNA ligase from Escherichia coli O1:K1 / APEC.